The following is a 211-amino-acid chain: Holliday junction resolvase RecU (211 aa).

Positions 87, 89, 102, and 121 each coordinate Mg(2+).

This sequence belongs to the RecU family. Mg(2+) serves as cofactor.

Its subcellular location is the cytoplasm. The catalysed reaction is Endonucleolytic cleavage at a junction such as a reciprocal single-stranded crossover between two homologous DNA duplexes (Holliday junction).. Endonuclease that resolves Holliday junction intermediates in genetic recombination. Cleaves mobile four-strand junctions by introducing symmetrical nicks in paired strands. Promotes annealing of linear ssDNA with homologous dsDNA. Required for DNA repair, homologous recombination and chromosome segregation. This Limosilactobacillus fermentum (strain NBRC 3956 / LMG 18251) (Lactobacillus fermentum) protein is Holliday junction resolvase RecU.